We begin with the raw amino-acid sequence, 384 residues long: DNA replication and repair protein RecF (384 aa).

30–37 (GENAQGKT) lines the ATP pocket.

The protein belongs to the RecF family.

The protein resides in the cytoplasm. In terms of biological role, the RecF protein is involved in DNA metabolism; it is required for DNA replication and normal SOS inducibility. RecF binds preferentially to single-stranded, linear DNA. It also seems to bind ATP. The polypeptide is DNA replication and repair protein RecF (Levilactobacillus brevis (strain ATCC 367 / BCRC 12310 / CIP 105137 / JCM 1170 / LMG 11437 / NCIMB 947 / NCTC 947) (Lactobacillus brevis)).